The following is a 240-amino-acid chain: MATLFIADLHLQTEEPAIVAGFLRFLAVEARQADALYILGDLFEAWIGDDDPNPLHREIAAAIKAVVNVGVPCFFIHGNRDFLIGKRFARESGMILLPQEKVLDLYGRNVLIMHGDTLCTDDAGYQAFRAKVHNPWVQRLFLTLPLFIRRRIAARMRAGSKAANSSKSLDIMDVNAQTVVAEMEKHRVQWLVHGHTHRPAVHELSVNDQPAFRVVLGAWHHEGSMVKVTPDNVELIAFPL.

The Mn(2+) site is built by Asp8, His10, Asp41, Asn79, and His114. A substrate-binding site is contributed by 79-80; the sequence is NR. 5 residues coordinate substrate: Asp122, Ser160, Asn164, Lys167, and His195. His195 and His197 together coordinate Mn(2+).

It belongs to the LpxH family. Requires Mn(2+) as cofactor.

It localises to the cell inner membrane. It catalyses the reaction UDP-2-N,3-O-bis[(3R)-3-hydroxytetradecanoyl]-alpha-D-glucosamine + H2O = 2-N,3-O-bis[(3R)-3-hydroxytetradecanoyl]-alpha-D-glucosaminyl 1-phosphate + UMP + 2 H(+). It participates in glycolipid biosynthesis; lipid IV(A) biosynthesis; lipid IV(A) from (3R)-3-hydroxytetradecanoyl-[acyl-carrier-protein] and UDP-N-acetyl-alpha-D-glucosamine: step 4/6. Functionally, hydrolyzes the pyrophosphate bond of UDP-2,3-diacylglucosamine to yield 2,3-diacylglucosamine 1-phosphate (lipid X) and UMP by catalyzing the attack of water at the alpha-P atom. Involved in the biosynthesis of lipid A, a phosphorylated glycolipid that anchors the lipopolysaccharide to the outer membrane of the cell. This Salmonella agona (strain SL483) protein is UDP-2,3-diacylglucosamine hydrolase.